A 525-amino-acid chain; its full sequence is MALDIHAHRILILDFGSQYTQLIARRVREIGVYCELHPFDMDDEAIREFAPKGVVLAGGPESVHEADSPRCPQAVFDLGVPVFGICYGMQTMAEQLGGKVAGSELREFGYARVDVVGKSRLLDGIEDHIDADGLFGLDVWMSHGDKVTKLPENFHILASTPSCPIAGMADDARGYYGVQFHPEVTHTKQGGRILSRFILDICGCEALWTPSKIAEDAIAQVRAQVGTDNVLLGLSGGVDSSVVAALLHKAIGDQLTCVFVDNGLLRLHEGEQVMAMFAENMGVKVIRANAEEQFLNNLAGESDPEKKRKIIGRTFIDVFDAESCKLDNIKYLAQGTIYPDVIESAGAKSGKAHVIKSHHNVGGLPEEMNLKLVEPLRELFKDEVRRLGLELGLPYDMVYRHPFPGPGLGVRILGEVKKEYADLLRRADHIFIEELRKADWYHKVSQAFVVFQPVKSVGVVGDGRRYAWVVALRAVETIDFMTARWAHLPYELLETVSGRIINEIEGISRVTYDVSSKPPATIEWE.

A Glutamine amidotransferase type-1 domain is found at 9–207 (RILILDFGSQ…ILDICGCEAL (199 aa)). Cysteine 86 acts as the Nucleophile in catalysis. Active-site residues include histidine 181 and glutamate 183. One can recognise a GMPS ATP-PPase domain in the interval 208–400 (WTPSKIAEDA…LGLPYDMVYR (193 aa)). An ATP-binding site is contributed by 235-241 (SGGVDSS).

Homodimer.

It catalyses the reaction XMP + L-glutamine + ATP + H2O = GMP + L-glutamate + AMP + diphosphate + 2 H(+). The protein operates within purine metabolism; GMP biosynthesis; GMP from XMP (L-Gln route): step 1/1. In terms of biological role, catalyzes the synthesis of GMP from XMP. In Pseudomonas syringae pv. syringae (strain B728a), this protein is GMP synthase [glutamine-hydrolyzing].